The chain runs to 107 residues: Pro-corazonin (107 aa).

A signal peptide spans methionine 1–cysteine 21. Pyrrolidone carboxylic acid is present on glutamine 22. Asparagine 32 is modified (asparagine amide). Residues serine 88 to tyrosine 107 constitute a propeptide that is removed on maturation.

The protein belongs to the corazonin family. As to expression, in the adult brain, expressed in four neurons of the lateral protocerebrum project axons towards the retrocerebral complex.

Its subcellular location is the secreted. Functionally, cardioactive peptide. Corazonin is probably involved in the physiological regulation of the heart beat. The polypeptide is Pro-corazonin (Apis mellifera (Honeybee)).